Here is a 352-residue protein sequence, read N- to C-terminus: NAD(+)-dependent homoserine dehydrogenase (352 aa).

The protein belongs to the homoserine dehydrogenase family.

The enzyme catalyses L-homoserine + NAD(+) = L-aspartate 4-semialdehyde + NADH + H(+). Dehydrogenase involved in the degradation of canavanine, the delta-oxa-analog of arginine, allowing growth on canavanine as sole nitrogen and carbon source. Catalyzes the conversion of homoserine and NAD(+) to aspartate-semialdehyde and NADH. Is highly specific for NAD(+) and cannot use NADP(+). This chain is NAD(+)-dependent homoserine dehydrogenase, found in Pseudomonas canavaninivorans.